The sequence spans 311 residues: Probable manganese-dependent inorganic pyrophosphatase (311 aa).

Mn(2+) contacts are provided by H9, D13, D15, D77, H99, and D151.

This sequence belongs to the PPase class C family. Mn(2+) serves as cofactor.

Its subcellular location is the cytoplasm. The enzyme catalyses diphosphate + H2O = 2 phosphate + H(+). This Streptococcus pyogenes serotype M49 (strain NZ131) protein is Probable manganese-dependent inorganic pyrophosphatase.